The chain runs to 343 residues: MKDLDWNNLGFSYIKTDYRFIAHWKDGKWDEGKLTTDSTLHIHEGSTALHYGQQCFEGLKAYRCKDGSINLFRPQANAERMQRTADRLLMPRVPTELFVRACKEVVKANQDWLGPYGSGATLYLRPFLIGVGENIGVKTAPEFIFSVFCCPVGAYFKGGLAPSNFITTDYDRAAPMGTGGVKVGGNYAASLLPHELAAEQGTPERKFADAIYLDPKTHTKIEEVGAANFFGITKDNKFITPKSESILPSITKYSLLHIAKERLGMEAIEGDVYIDQLDQFVEAGACGTAAVITPVGGIQHNGKFHVFDSETEVGPVTRRLYDELTGIQFGDIEAPEGWIVKVE.

Lys-182 carries the post-translational modification N6-(pyridoxal phosphate)lysine.

It belongs to the class-IV pyridoxal-phosphate-dependent aminotransferase family. Pyridoxal 5'-phosphate serves as cofactor.

The enzyme catalyses L-leucine + 2-oxoglutarate = 4-methyl-2-oxopentanoate + L-glutamate. It catalyses the reaction L-isoleucine + 2-oxoglutarate = (S)-3-methyl-2-oxopentanoate + L-glutamate. It carries out the reaction L-valine + 2-oxoglutarate = 3-methyl-2-oxobutanoate + L-glutamate. Its pathway is amino-acid biosynthesis; L-isoleucine biosynthesis; L-isoleucine from 2-oxobutanoate: step 4/4. It functions in the pathway amino-acid biosynthesis; L-leucine biosynthesis; L-leucine from 3-methyl-2-oxobutanoate: step 4/4. The protein operates within amino-acid biosynthesis; L-valine biosynthesis; L-valine from pyruvate: step 4/4. Its function is as follows. Acts on leucine, isoleucine and valine. This chain is Branched-chain-amino-acid aminotransferase (ilvE), found in Haemophilus influenzae (strain ATCC 51907 / DSM 11121 / KW20 / Rd).